The following is a 373-amino-acid chain: Polygalacturonase (373 aa).

An N-terminal signal peptide occupies residues 1–24; that stretch reads MVRNIVSRLCSQLFALPSSSLQER. A disulfide bridge links Cys27 with Cys42. N-linked (GlcNAc...) asparagine glycosylation is found at Asn65 and Asn94. PbH1 repeat units follow at residues 136-158, 159-197, 198-219, 220-240, 249-270, 278-300, 312-333, and 345-369; these read TGNS…DITG, SSQL…DISS, SDHV…AVTS, GTNI…SIGS, VDGV…RIKS, INNV…DVQQ, TNGV…ASSA, and CSGF…YPTN. Catalysis depends on Asp212, which acts as the Proton donor. Residues Cys214 and Cys230 are joined by a disulfide bond. The active site involves His234. N-linked (GlcNAc...) asparagine glycans are attached at residues Asn280 and Asn290. Cystine bridges form between Cys340–Cys345 and Cys364–Cys371.

It belongs to the glycosyl hydrolase 28 family.

Its subcellular location is the secreted. It catalyses the reaction (1,4-alpha-D-galacturonosyl)n+m + H2O = (1,4-alpha-D-galacturonosyl)n + (1,4-alpha-D-galacturonosyl)m.. Its function is as follows. Involved in maceration and soft-rotting of plant tissue. Hydrolyzes the 1,4-alpha glycosidic bonds of de-esterified pectate in the smooth region of the plant cell wall. The sequence is that of Polygalacturonase (PGA) from Fusarium fujikuroi (Bakanae and foot rot disease fungus).